The following is a 72-amino-acid chain: Protein kish-A (72 aa).

Residues 1 to 26 form the signal peptide; sequence MSAIFNFQSLLIVILLLICTCAYLRA. Residues 27-53 lie on the Extracellular side of the membrane; it reads LVPNLLDKNKTGILGIFWKCARIGERK. N-linked (GlcNAc...) asparagine glycosylation occurs at Asn-35. The helical transmembrane segment at 54–71 threads the bilayer; that stretch reads SPYVAVCCVVMAFSILFM. A topological domain (cytoplasmic) is located at residue Gln-72.

The protein belongs to the KISH family.

It is found in the golgi apparatus membrane. In terms of biological role, involved in the early part of the secretory pathway. The polypeptide is Protein kish-A (tmem167a) (Xenopus tropicalis (Western clawed frog)).